The following is a 371-amino-acid chain: Aldose sugar dehydrogenase YliI (371 aa).

Positions 1 to 20 (MHRQSFFLVPLICLSSALWA) are cleaved as a signal peptide. Residue glutamine 82 coordinates pyrroloquinoline quinone. Histidine 147 functions as the Proton acceptor in the catalytic mechanism. The PQQ stretch occupies residues 214–215 (RN). Glutamate 240 and tyrosine 250 together coordinate Ca(2+). Tyrosine 261 lines the pyrroloquinoline quinone pocket. PQQ regions lie at residues 312-314 (ALK) and 341-343 (RIR).

Belongs to the PQQ oxidoreductase GdhB family. Monomer. Requires Ca(2+) as cofactor. Pyrroloquinoline quinone serves as cofactor.

The protein resides in the cell outer membrane. Its function is as follows. Aldose sugar dehydrogenase with broad substrate specificity. The physiological substrate is unknown. Can oxidize glucose to gluconolactone. Can also utilize D-arabinose, L-arabinose and 2-deoxy-glucose. Has higher activity towards oligomeric sugars, such as maltose, maltotriose or cellobiose. It may function to input sugar-derived electrons into the respiratory network. The chain is Aldose sugar dehydrogenase YliI (yliI) from Escherichia coli (strain K12).